We begin with the raw amino-acid sequence, 1352 residues long: Patatin-like phospholipase domain-containing protein 7 (1352 aa).

Over 1-36 the chain is Lumenal; the sequence is MQNEEDACLEAGYCLGTTLSSWRLHFMEEQSQSTML. A helical transmembrane segment spans residues 37 to 57; it reads MGIGIGALLTLAFVGITFFFV. Topologically, residues 58–1352 are cytoplasmic; the sequence is YRRVRRLRRA…DQGPRLEHPS (1295 aa). Position 170–297 (170–297) interacts with a nucleoside 3',5'-cyclic phosphate; it reads VLGHFEKPLF…VRVVQIIMVR (128 aa). The interval 340–364 is disordered; the sequence is MSYGPEEQLERSLRPSEFSSSDHGS. Phosphoserine occurs at positions 341 and 379. Positions 384–411 are disordered; sequence SNHGEVDELRQSQGSGSNTSAFQESHEG. Residues 394 to 406 show a composition bias toward polar residues; that stretch reads QSQGSGSNTSAFQ. A nucleoside 3',5'-cyclic phosphate-binding positions include 499 to 585 and 613 to 718; these read FLHV…YEIM and ALDW…LGEK. The interval 681–967 is involved in the binding to lipid droplets; that stretch reads VHAVRDSELA…RGCAQVGILR (287 aa). The PNPLA domain occupies 950–1116; that stretch reads LVLGGGGARG…INNLPADVAR (167 aa). The GXGXXG signature appears at 954–959; sequence GGGARG. The GXSXG signature appears at 981–985; it reads GTSIG. Catalysis depends on Ser-983, which acts as the Nucleophile. Asp-1103 (proton acceptor) is an active-site residue. A DGA/G motif is present at residues 1103–1105; sequence DGG. A Phosphoserine modification is found at Ser-1280. Thr-1284 carries the phosphothreonine modification. Positions 1295–1352 are disordered; that stretch reads KETYADFQSTGIELDSDSEYEPSMLQGPPSLTSPEQSQDSFPWLPNQDDQGPRLEHPS. Residues 1323–1334 show a composition bias toward polar residues; the sequence is PSLTSPEQSQDS.

Belongs to the NTE family. Expressed in white and brown adipose tissue, cardiac muscle, skeletal muscle, and testis. As to expression, expressed in white adipose tissue, cardiac muscle, skeletal muscle, and testis.

The protein localises to the endoplasmic reticulum membrane. The protein resides in the lipid droplet. It catalyses the reaction a 1-acyl-sn-glycero-3-phosphocholine + H2O = sn-glycerol 3-phosphocholine + a fatty acid + H(+). The catalysed reaction is 1-(9Z-octadecenoyl)-sn-glycero-3-phosphocholine + H2O = sn-glycerol 3-phosphocholine + (9Z)-octadecenoate + H(+). It carries out the reaction 1-(9Z-octadecenoyl)-sn-glycero-3-phosphoethanolamine + H2O = sn-glycero-3-phosphoethanolamine + (9Z)-octadecenoate + H(+). The enzyme catalyses 1-(9Z-octadecenoyl)-sn-glycero-3-phospho-L-serine + H2O = sn-glycero-3-phospho-L-serine + (9Z)-octadecenoate + H(+). It catalyses the reaction 1-hexadecanoyl-sn-glycero-3-phosphocholine + H2O = sn-glycerol 3-phosphocholine + hexadecanoate + H(+). The catalysed reaction is 1-hexadecanoyl-sn-glycero-3-phosphate + H2O = sn-glycerol 3-phosphate + hexadecanoate + H(+). CAMP does not regulate lysophospholipase activity in vitro. Slightly inhibited by organophosphorus (OP) compounds such as mipafox, which is likely why mice are less sensitive to distal axonophathy induced by OPs compared to humans. In terms of biological role, lysophospholipase which preferentially deacylates unsaturated lysophosphatidylcholine (C18:1), generating glycerophosphocholine. Can also deacylate, to a lesser extent, lysophosphatidylethanolamine (C18:1), lysophosphatidyl-L-serine (C18:1) and lysophosphatidic acid (C16:0). Functionally, lysophospholipase. Lacks lysophospholipase activity. In Mus musculus (Mouse), this protein is Patatin-like phospholipase domain-containing protein 7 (Pnpla7).